The following is a 423-amino-acid chain: Adenylosuccinate synthetase (423 aa).

Residues 12 to 18 (GDEGKGK) and 40 to 42 (GHT) contribute to the GTP site. The active-site Proton acceptor is the D13. D13 and G40 together coordinate Mg(2+). IMP contacts are provided by residues 13 to 16 (DEGK), 38 to 41 (NAGH), T128, R142, Q223, T238, and R302. H41 (proton donor) is an active-site residue. 298–304 (TTTGRPR) is a substrate binding site. Residues R304, 330 to 332 (RLD), and 412 to 414 (CIG) contribute to the GTP site.

The protein belongs to the adenylosuccinate synthetase family. Homodimer. Requires Mg(2+) as cofactor.

It localises to the cytoplasm. The enzyme catalyses IMP + L-aspartate + GTP = N(6)-(1,2-dicarboxyethyl)-AMP + GDP + phosphate + 2 H(+). The protein operates within purine metabolism; AMP biosynthesis via de novo pathway; AMP from IMP: step 1/2. Its function is as follows. Plays an important role in the de novo pathway of purine nucleotide biosynthesis. Catalyzes the first committed step in the biosynthesis of AMP from IMP. This is Adenylosuccinate synthetase from Dehalococcoides mccartyi (strain ATCC BAA-2266 / KCTC 15142 / 195) (Dehalococcoides ethenogenes (strain 195)).